A 218-amino-acid chain; its full sequence is MASRGGGRGRGRGQLTFNVEAVGIGKGDALPPPTLQPSPLFPPLEFRPVPLPSGEEGEYVLALKQELRGAMRQLPYFIRPAVPKRDVERYSDKYQMSGPIDNAIDWNPDWRRLPRELKIRVRKLQKERITILLPKRPPKTTEDKEETIQKLETLEKKEEEVTSEEDEEKEEEEEKEEEEEEEYDEEEHEEETDYIMSYFDNGEDFGGDSDDNMDEAIY.

The disordered stretch occupies residues Leu-133–Tyr-218. The span at Lys-139 to Glu-160 shows a compositional bias: basic and acidic residues. Acidic residues-rich tracts occupy residues Val-161–Asp-193 and Asn-201–Tyr-218.

The protein belongs to the eukaryotic RPC7 RNA polymerase subunit family. Component of the RNA polymerase III (Pol III) complex consisting of 17 subunits. Pol III exists as two alternative complexes defined by the mutually exclusive incorporation of subunit POLR3G/RPC7alpha or POLR3GL/RPC7beta. Found in a trimeric complex with POLR3C/RPC3 and POLR3F/RPC6. Directly interacts with POLR3C. In terms of tissue distribution, widely expressed. Expressed in CD4-positive T cells.

It is found in the nucleus. Functionally, DNA-dependent RNA polymerase catalyzes the transcription of DNA into RNA using the four ribonucleoside triphosphates as substrates. Specific peripheric component of RNA polymerase III which synthesizes small RNAs, such as 5S rRNA and tRNAs. The polypeptide is DNA-directed RNA polymerase III subunit RPC7-like (Homo sapiens (Human)).